The following is a 1206-amino-acid chain: Methionine synthase (1206 aa).

Residues 1 to 314 form the Hcy-binding domain; it reads MRVTAANQHQ…DHIREVAAAV (314 aa). Zn(2+) is bound by residues Cys-233, Cys-299, and Cys-300. Residues 350–609 form the Pterin-binding domain; sequence VLMIGERTNA…IPEEQRQAAL (260 aa). One can recognise a B12-binding N-terminal domain in the interval 642–735; it reads REAELAKLPL…HMEKSDCDFG (94 aa). The region spanning 740 to 877 is the B12-binding domain; the sequence is KGRIVLATVK…SAKRGEALAP (138 aa). Residues 750–754, His-753, Ser-798, and Ala-856 contribute to the methylcob(III)alamin site; that span reads GDVHD. Residues 873-925 form a disordered region; the sequence is EALAPGSPESLAAEADRNKETERKARHERSKRIAVQRKAAEEPVEVPERSDVP. Basic and acidic residues predominate over residues 886-897; the sequence is EADRNKETERKA. The span at 898–907 shows a compositional bias: basic residues; it reads RHERSKRIAV. Positions 907–1206 constitute an AdoMet activation domain; that stretch reads VQRKAAEEPV…HHPAAKYFNV (300 aa). Residues 910–924 are compositionally biased toward basic and acidic residues; the sequence is KAAEEPVEVPERSDV. S-adenosyl-L-methionine is bound by residues Asp-954, Arg-1149, and 1203-1204; that span reads YF.

This sequence belongs to the vitamin-B12 dependent methionine synthase family. Methylcob(III)alamin is required as a cofactor. Requires Zn(2+) as cofactor.

It catalyses the reaction (6S)-5-methyl-5,6,7,8-tetrahydrofolate + L-homocysteine = (6S)-5,6,7,8-tetrahydrofolate + L-methionine. Its pathway is amino-acid biosynthesis; L-methionine biosynthesis via de novo pathway; L-methionine from L-homocysteine (MetH route): step 1/1. Its function is as follows. Catalyzes the transfer of a methyl group from methyl-cobalamin to homocysteine, yielding enzyme-bound cob(I)alamin and methionine. Subsequently, remethylates the cofactor using methyltetrahydrofolate. In Mycobacterium leprae (strain TN), this protein is Methionine synthase (metH).